The following is a 120-amino-acid chain: Large ribosomal subunit protein uL18 (120 aa).

This sequence belongs to the universal ribosomal protein uL18 family. Part of the 50S ribosomal subunit; part of the 5S rRNA/L5/L18/L25 subcomplex. Contacts the 5S and 23S rRNAs.

Functionally, this is one of the proteins that bind and probably mediate the attachment of the 5S RNA into the large ribosomal subunit, where it forms part of the central protuberance. This Methylobacterium nodulans (strain LMG 21967 / CNCM I-2342 / ORS 2060) protein is Large ribosomal subunit protein uL18.